The chain runs to 195 residues: Probable GTP-binding protein EngB (195 aa).

Residues 22-195 (QLPEIALAGR…WSALSRYIKR (174 aa)) enclose the EngB-type G domain. Residues 30 to 37 (GRSNVGKS), 57 to 61 (GKTQT), 75 to 78 (DVPG), 142 to 145 (TKLD), and 174 to 176 (FSA) contribute to the GTP site. Residues Ser-37 and Thr-59 each coordinate Mg(2+).

This sequence belongs to the TRAFAC class TrmE-Era-EngA-EngB-Septin-like GTPase superfamily. EngB GTPase family. Mg(2+) serves as cofactor.

Its function is as follows. Necessary for normal cell division and for the maintenance of normal septation. In Oceanobacillus iheyensis (strain DSM 14371 / CIP 107618 / JCM 11309 / KCTC 3954 / HTE831), this protein is Probable GTP-binding protein EngB.